Consider the following 404-residue polypeptide: Serine/threonine transporter SstT (404 aa).

Helical transmembrane passes span 17 to 37 (IGIG…LTGF), 39 to 59 (ILGK…VFAL), 75 to 95 (MTLI…VAVL), 138 to 158 (ALAT…GLAL), 179 to 199 (IVVW…FTTI), 212 to 232 (FLIL…NPLI), 287 to 307 (IPLG…VLTL), and 313 to 333 (FGIP…AVSA).

Belongs to the dicarboxylate/amino acid:cation symporter (DAACS) (TC 2.A.23) family.

It is found in the cell membrane. The catalysed reaction is L-serine(in) + Na(+)(in) = L-serine(out) + Na(+)(out). It catalyses the reaction L-threonine(in) + Na(+)(in) = L-threonine(out) + Na(+)(out). Its function is as follows. Involved in the import of serine and threonine into the cell, with the concomitant import of sodium (symport system). The chain is Serine/threonine transporter SstT from Streptococcus pyogenes serotype M5 (strain Manfredo).